The following is a 179-amino-acid chain: Cell division protein SepF (179 aa).

Residues 18–55 are disordered; that stretch reads EDSSLPYEKRDEPVFTPVNSSQEPALPMNQPSQSAGTK. Residues 34–55 are compositionally biased toward polar residues; it reads PVNSSQEPALPMNQPSQSAGTK.

It belongs to the SepF family. As to quaternary structure, homodimer. Interacts with FtsZ.

It is found in the cytoplasm. Its function is as follows. Cell division protein that is part of the divisome complex and is recruited early to the Z-ring. Probably stimulates Z-ring formation, perhaps through the cross-linking of FtsZ protofilaments. Its function overlaps with FtsA. This chain is Cell division protein SepF, found in Streptococcus pneumoniae (strain ATCC 700669 / Spain 23F-1).